A 248-amino-acid chain; its full sequence is Meiotically up-regulated gene 65 protein (248 aa).

Functionally, has a role in meiosis. This Schizosaccharomyces pombe (strain 972 / ATCC 24843) (Fission yeast) protein is Meiotically up-regulated gene 65 protein (mug65).